Reading from the N-terminus, the 319-residue chain is Sulfate adenylyltransferase subunit 2 (319 aa).

2 disordered regions span residues Met1–Pro22 and Arg296–Phe319.

This sequence belongs to the PAPS reductase family. CysD subfamily.

The enzyme catalyses sulfate + ATP + H(+) = adenosine 5'-phosphosulfate + diphosphate. It functions in the pathway antibiotic biosynthesis; mitomycin C biosynthesis. Functionally, with CysN forms the ATP sulfurylase (ATPS) that catalyzes the adenylation of sulfate producing adenosine 5'-phosphosulfate (APS) and diphosphate, the first enzymatic step in sulfur assimilation pathway. APS synthesis involves the formation of a high-energy phosphoric-sulfuric acid anhydride bond driven by GTP hydrolysis by CysN coupled to ATP hydrolysis by CysD. The sequence is that of Sulfate adenylyltransferase subunit 2 (mmcV) from Streptomyces lavendulae.